A 266-amino-acid polypeptide reads, in one-letter code: Thiazole synthase (266 aa).

The Schiff-base intermediate with DXP role is filled by K106. 1-deoxy-D-xylulose 5-phosphate-binding positions include G167, 193-194 (AG), and 215-216 (NT).

This sequence belongs to the ThiG family. Homotetramer. Forms heterodimers with either ThiH or ThiS.

It localises to the plastid. Its subcellular location is the chloroplast. It catalyses the reaction [ThiS sulfur-carrier protein]-C-terminal-Gly-aminoethanethioate + 2-iminoacetate + 1-deoxy-D-xylulose 5-phosphate = [ThiS sulfur-carrier protein]-C-terminal Gly-Gly + 2-[(2R,5Z)-2-carboxy-4-methylthiazol-5(2H)-ylidene]ethyl phosphate + 2 H2O + H(+). It functions in the pathway cofactor biosynthesis; thiamine diphosphate biosynthesis. Functionally, catalyzes the rearrangement of 1-deoxy-D-xylulose 5-phosphate (DXP) to produce the thiazole phosphate moiety of thiamine. Sulfur is provided by the thiocarboxylate moiety of the carrier protein ThiS. In vitro, sulfur can be provided by H(2)S. The sequence is that of Thiazole synthase from Cyanidium caldarium (Red alga).